A 273-amino-acid chain; its full sequence is Undecaprenyl-diphosphatase (273 aa).

7 helical membrane passes run 45–65 (AKTF…VMFW), 90–110 (LTLI…LIFH), 116–136 (LFNP…LIAA), 154–173 (YRQA…PGFS), 190–210 (YAAS…ATAL), 222–242 (ADFP…LVAI), and 252–272 (ISFI…YVVF).

This sequence belongs to the UppP family.

It localises to the cell inner membrane. It carries out the reaction di-trans,octa-cis-undecaprenyl diphosphate + H2O = di-trans,octa-cis-undecaprenyl phosphate + phosphate + H(+). In terms of biological role, catalyzes the dephosphorylation of undecaprenyl diphosphate (UPP). Confers resistance to bacitracin. The chain is Undecaprenyl-diphosphatase from Enterobacter sp. (strain 638).